Consider the following 248-residue polypeptide: MNDRIIEFEPLIEGILIKRYKRFLADIQIENGEIVTAHCANTGPMKGLLNEGANVRISFSSSTKRKLPWTWEQVKVIGRDNKEVWVGINTLFANKLIRKVIEQNLFKDKLGEIAKIKSEVPYGKDKKSRIDFLLTPKSSNPDNRNIYVEVKNTTWTKNNVALFPDTETKRGQKHLIELKGLIPESKSVLVPCITRKDIDYFAPGDESDPLYGELFRESISAGMLLIPCCFEFHSDHVAWKGFKPLKLN.

It belongs to the SfsA family.

The protein is Sugar fermentation stimulation protein homolog of Prochlorococcus marinus subsp. pastoris (strain CCMP1986 / NIES-2087 / MED4).